A 316-amino-acid polypeptide reads, in one-letter code: D-alanine--D-alanine ligase (316 aa).

Residues 108–310 (ERYEELSVVK…FDELVDLIIK (203 aa)) form the ATP-grasp domain. 138-193 (EEKIGLPCVVKPRKEGSSIGTHICFSKEELLDALKNEFKNYDEMIVQEYIKGKEIT) is a binding site for ATP. D265, E277, and N279 together coordinate Mg(2+).

The protein belongs to the D-alanine--D-alanine ligase family. It depends on Mg(2+) as a cofactor. The cofactor is Mn(2+).

The protein resides in the cytoplasm. The catalysed reaction is 2 D-alanine + ATP = D-alanyl-D-alanine + ADP + phosphate + H(+). It functions in the pathway cell wall biogenesis; peptidoglycan biosynthesis. Functionally, cell wall formation. The polypeptide is D-alanine--D-alanine ligase (Fervidobacterium nodosum (strain ATCC 35602 / DSM 5306 / Rt17-B1)).